Here is a 175-residue protein sequence, read N- to C-terminus: Nucleoside triphosphate/diphosphate phosphatase (175 aa).

The Proton donor role is filled by R23. Residues N87, D103, D105, D107, D120, and E123 each contribute to the Mg(2+) site.

The protein belongs to the Ntdp family. Requires Mg(2+) as cofactor.

The catalysed reaction is a ribonucleoside 5'-triphosphate + H2O = a ribonucleoside 5'-diphosphate + phosphate + H(+). It carries out the reaction a ribonucleoside 5'-diphosphate + H2O = a ribonucleoside 5'-phosphate + phosphate + H(+). Has nucleoside phosphatase activity towards nucleoside triphosphates and nucleoside diphosphates. The chain is Nucleoside triphosphate/diphosphate phosphatase from Oceanobacillus iheyensis (strain DSM 14371 / CIP 107618 / JCM 11309 / KCTC 3954 / HTE831).